Reading from the N-terminus, the 192-residue chain is Peptidyl-tRNA hydrolase (192 aa).

Residue Tyr17 participates in tRNA binding. Residue His22 is the Proton acceptor of the active site. TRNA is bound by residues Tyr68, Asn70, and Asn116.

The protein belongs to the PTH family. In terms of assembly, monomer.

The protein localises to the cytoplasm. The catalysed reaction is an N-acyl-L-alpha-aminoacyl-tRNA + H2O = an N-acyl-L-amino acid + a tRNA + H(+). In terms of biological role, hydrolyzes ribosome-free peptidyl-tRNAs (with 1 or more amino acids incorporated), which drop off the ribosome during protein synthesis, or as a result of ribosome stalling. Functionally, catalyzes the release of premature peptidyl moieties from peptidyl-tRNA molecules trapped in stalled 50S ribosomal subunits, and thus maintains levels of free tRNAs and 50S ribosomes. The protein is Peptidyl-tRNA hydrolase of Mycobacterium sp. (strain JLS).